We begin with the raw amino-acid sequence, 482 residues long: Cobyric acid synthase (482 aa).

The 188-residue stretch at 243–430 folds into the GATase cobBQ-type domain; sequence ACKVVVPQLE…LHGLFTSDAF (188 aa). Catalysis depends on cysteine 325, which acts as the Nucleophile. Residue histidine 422 is part of the active site.

This sequence belongs to the CobB/CobQ family. CobQ subfamily.

Its pathway is cofactor biosynthesis; adenosylcobalamin biosynthesis. In terms of biological role, catalyzes amidations at positions B, D, E, and G on adenosylcobyrinic A,C-diamide. NH(2) groups are provided by glutamine, and one molecule of ATP is hydrogenolyzed for each amidation. This is Cobyric acid synthase from Ruegeria sp. (strain TM1040) (Silicibacter sp.).